A 587-amino-acid polypeptide reads, in one-letter code: Tectonic-1 (587 aa).

An N-terminal signal peptide occupies residues 1–22 (MRPRGLPPLLVVLLGCWASVSA). Asn-36 carries N-linked (GlcNAc...) asparagine glycosylation. Positions 46-68 (GTFPSTRPPGTPRAPGPSSGPRP) are disordered. Residues 51–68 (TRPPGTPRAPGPSSGPRP) are compositionally biased toward pro residues. N-linked (GlcNAc...) asparagine glycans are attached at residues Asn-295 and Asn-528.

This sequence belongs to the tectonic family. Part of the tectonic-like complex (also named B9 complex).

It localises to the cytoplasm. The protein localises to the cytoskeleton. Its subcellular location is the cilium basal body. It is found in the secreted. In terms of biological role, component of the tectonic-like complex, a complex localized at the transition zone of primary cilia and acting as a barrier that prevents diffusion of transmembrane proteins between the cilia and plasma membranes. Regulator of Hedgehog (Hh), required for both activation and inhibition of the Hh pathway in the patterning of the neural tube. During neural tube development, it is required for formation of the most ventral cell types and for full Hh pathway activation. Functions in Hh signal transduction to fully activate the pathway in the presence of high Hh levels and to repress the pathway in the absence of Hh signals. Modulates Hh signal transduction downstream of SMO and RAB23. The chain is Tectonic-1 (TCTN1) from Homo sapiens (Human).